A 448-amino-acid polypeptide reads, in one-letter code: Tubulin beta-1 chain (448 aa).

GTP contacts are provided by Gln-11, Glu-72, Ser-141, Gly-145, Thr-146, Gly-147, Asn-207, and Asn-229. Position 72 (Glu-72) interacts with Mg(2+). A disordered region spans residues 424–448 (QQYQDAGMDDDEAEEAYEEEEPVEE). Residues 430–448 (GMDDDEAEEAYEEEEPVEE) are compositionally biased toward acidic residues.

The protein belongs to the tubulin family. As to quaternary structure, dimer of alpha and beta chains. A typical microtubule is a hollow water-filled tube with an outer diameter of 25 nm and an inner diameter of 15 nM. Alpha-beta heterodimers associate head-to-tail to form protofilaments running lengthwise along the microtubule wall with the beta-tubulin subunit facing the microtubule plus end conferring a structural polarity. Microtubules usually have 13 protofilaments but different protofilament numbers can be found in some organisms and specialized cells. It depends on Mg(2+) as a cofactor.

It localises to the cytoplasm. It is found in the cytoskeleton. Its function is as follows. Tubulin is the major constituent of microtubules, a cylinder consisting of laterally associated linear protofilaments composed of alpha- and beta-tubulin heterodimers. Microtubules grow by the addition of GTP-tubulin dimers to the microtubule end, where a stabilizing cap forms. Below the cap, tubulin dimers are in GDP-bound state, owing to GTPase activity of alpha-tubulin. In Colletotrichum gloeosporioides (Anthracnose fungus), this protein is Tubulin beta-1 chain (TUB1).